The sequence spans 126 residues: uncharacterized protein (126 aa).

3 consecutive transmembrane segments (helical) span residues 4–24, 42–62, and 64–84; these read LIIA…VNIL, AITI…IINP, and ISAS…SYTV.

It localises to the membrane. This is an uncharacterized protein from Saccharomyces cerevisiae (strain ATCC 204508 / S288c) (Baker's yeast).